The following is a 663-amino-acid chain: MQNWFKSGDSLNLVDLYVKKFMDLIEIERRCEMDFHKNEIIKLGKKRENVGRAILNLKGKFLGESLGCTIVRFGRKKPFKTEISPGDVVLVSKENPLQSDLYANVIYVGKNFIDVAFDVDVPKWVYKERVRVDLYVNDITFKRMKEALREFARKRDKLAYIILGIEHPEKPLREDIKLEFYDKNLNESQKLAVKKAVLSRDLYLIHGPPGTGKTRTITEVIVQEVKFNKHKVLATADSNIAADNILEYLIKKYPDLKVVRVGHPTRISKDLIQHSLPYLIENHEKYQEILALREKIKEIKEQRDKFLKPSPRWRRGMSDEQILKVAKRKKSYRGIPKEKIVSMAEWIIRNKKIKRIINNLDEITEKIMNEILAEADVIVATNSMAGSEILKGWEFDVIVIDEGSQAMEPSCLIPIVKGRKLIMAGDHKQLPPTVLSENEELKKTLFERLIKKYPEFSSILEIQYRMNEKIMEFPNKMFYNNKLKADESVKNITLLDLVKEEEIDEVDRDIINEIPVQFINVEGIERKDKESPSYYNIEEAEKVLEIVKKLVKYKIPTNVITPYDAQVRYLRRLFEEHNIDIEVNTVDGFQGRENEAIVISFVRTKNFGFLKDLRRLNVAITRAKRKLILIGNENLLKQDKVYNEMIKWAKSVEEEHKNKIIQK.

Residue 207–214 participates in ATP binding; it reads GPPGTGKT.

The protein belongs to the DNA2/NAM7 helicase family.

This is an uncharacterized protein from Methanocaldococcus jannaschii (strain ATCC 43067 / DSM 2661 / JAL-1 / JCM 10045 / NBRC 100440) (Methanococcus jannaschii).